A 238-amino-acid polypeptide reads, in one-letter code: Adapter protein MecA (238 aa).

Basic and acidic residues predominate over residues 120-136; the sequence is QQQKDNKQNQDQNERNR. The disordered stretch occupies residues 120–139; the sequence is QQQKDNKQNQDQNERNRQNT.

It belongs to the MecA family. Homodimer.

Functionally, enables the recognition and targeting of unfolded and aggregated proteins to the ClpC protease or to other proteins involved in proteolysis. This chain is Adapter protein MecA, found in Staphylococcus saprophyticus subsp. saprophyticus (strain ATCC 15305 / DSM 20229 / NCIMB 8711 / NCTC 7292 / S-41).